A 279-amino-acid chain; its full sequence is Large ribosomal subunit protein uL2 (279 aa).

Disordered regions lie at residues 33-58 (LLAP…GGGH) and 223-279 (GVAM…RKRG). Basic residues-rich tracts occupy residues 40–58 (KGGR…GGGH) and 269–279 (VRRRYATRKRG).

This sequence belongs to the universal ribosomal protein uL2 family. As to quaternary structure, part of the 50S ribosomal subunit. Forms a bridge to the 30S subunit in the 70S ribosome.

One of the primary rRNA binding proteins. Required for association of the 30S and 50S subunits to form the 70S ribosome, for tRNA binding and peptide bond formation. It has been suggested to have peptidyltransferase activity; this is somewhat controversial. Makes several contacts with the 16S rRNA in the 70S ribosome. The sequence is that of Large ribosomal subunit protein uL2 from Salinispora arenicola (strain CNS-205).